Reading from the N-terminus, the 457-residue chain is Bifunctional protein GlmU (457 aa).

Residues 1-229 are pyrophosphorylase; the sequence is MSNSAKSVVI…HSEMEGVNNR (229 aa). UDP-N-acetyl-alpha-D-glucosamine is bound by residues 11–14, Lys25, Gln76, 81–82, 103–105, Gly140, Glu154, Asn169, and Asn227; these read LAAG, GT, and YGD. A Mg(2+)-binding site is contributed by Asp105. Asn227 lines the Mg(2+) pocket. The interval 230 to 250 is linker; it reads LQLAALERIYQTEQAERLLLE. The segment at 251-457 is N-acetyltransferase; sequence GVMLLDPARF…GWKRPVKKKQ (207 aa). Residues Arg333 and Lys351 each contribute to the UDP-N-acetyl-alpha-D-glucosamine site. The Proton acceptor role is filled by His363. Residues Tyr366 and Asn377 each coordinate UDP-N-acetyl-alpha-D-glucosamine. Residues Ala380, 386-387, Ser405, Ala423, and Arg440 each bind acetyl-CoA; that span reads NY.

This sequence in the N-terminal section; belongs to the N-acetylglucosamine-1-phosphate uridyltransferase family. In the C-terminal section; belongs to the transferase hexapeptide repeat family. In terms of assembly, homotrimer. It depends on Mg(2+) as a cofactor.

Its subcellular location is the cytoplasm. It catalyses the reaction alpha-D-glucosamine 1-phosphate + acetyl-CoA = N-acetyl-alpha-D-glucosamine 1-phosphate + CoA + H(+). The enzyme catalyses N-acetyl-alpha-D-glucosamine 1-phosphate + UTP + H(+) = UDP-N-acetyl-alpha-D-glucosamine + diphosphate. It functions in the pathway nucleotide-sugar biosynthesis; UDP-N-acetyl-alpha-D-glucosamine biosynthesis; N-acetyl-alpha-D-glucosamine 1-phosphate from alpha-D-glucosamine 6-phosphate (route II): step 2/2. The protein operates within nucleotide-sugar biosynthesis; UDP-N-acetyl-alpha-D-glucosamine biosynthesis; UDP-N-acetyl-alpha-D-glucosamine from N-acetyl-alpha-D-glucosamine 1-phosphate: step 1/1. It participates in bacterial outer membrane biogenesis; LPS lipid A biosynthesis. Functionally, catalyzes the last two sequential reactions in the de novo biosynthetic pathway for UDP-N-acetylglucosamine (UDP-GlcNAc). The C-terminal domain catalyzes the transfer of acetyl group from acetyl coenzyme A to glucosamine-1-phosphate (GlcN-1-P) to produce N-acetylglucosamine-1-phosphate (GlcNAc-1-P), which is converted into UDP-GlcNAc by the transfer of uridine 5-monophosphate (from uridine 5-triphosphate), a reaction catalyzed by the N-terminal domain. The sequence is that of Bifunctional protein GlmU from Proteus mirabilis (strain HI4320).